A 658-amino-acid polypeptide reads, in one-letter code: Carnitine O-palmitoyltransferase 2, mitochondrial (658 aa).

The N-terminal 26 residues, 1–26, are a transit peptide targeting the mitochondrion; the sequence is MARLLTSSSALRWGAVSSSQSVGRAY. Residues 27–179 lie on the Mitochondrial matrix side of the membrane; it reads SSGSPDTEYV…GYLEPEIFHL (153 aa). Residues 180-209 constitute an intramembrane region (note=Mitochondrial inner membrane); sequence NPAKSDTLTFRKLIRFVPSSLSWYGAYMVN. The Mitochondrial matrix segment spans residues 210-658; the sequence is AYPLDMSQYF…FTVLQDKPIK (449 aa). Catalysis depends on His-373, which acts as the Proton acceptor. A CoA-binding site is contributed by 453-465; it reads GKELLKTQKLSPD. 3 residues coordinate (R)-carnitine: Tyr-487, Ser-489, and Thr-500.

The protein belongs to the carnitine/choline acetyltransferase family.

The protein resides in the mitochondrion inner membrane. It carries out the reaction (R)-carnitine + hexadecanoyl-CoA = O-hexadecanoyl-(R)-carnitine + CoA. The catalysed reaction is octanoyl-CoA + (R)-carnitine = O-octanoyl-(R)-carnitine + CoA. It catalyses the reaction decanoyl-CoA + (R)-carnitine = O-decanoyl-(R)-carnitine + CoA. The enzyme catalyses dodecanoyl-CoA + (R)-carnitine = O-dodecanoyl-R-carnitine + CoA. It carries out the reaction tetradecanoyl-CoA + (R)-carnitine = O-tetradecanoyl-(R)-carnitine + CoA. The catalysed reaction is (R)-carnitine + octadecanoyl-CoA = O-octadecanoyl-(R)-carnitine + CoA. It catalyses the reaction eicosanoyl-CoA + (R)-carnitine = O-eicosanoyl-(R)-carnitine + CoA. The enzyme catalyses (9Z)-tetradecenoyl-CoA + (R)-carnitine = O-(9Z)-tetradecenoyl-(R)-carnitine + CoA. It carries out the reaction (5Z)-tetradecenoyl-CoA + (R)-carnitine = O-(5Z)-tetradecenoyl-(R)-carnitine + CoA. The catalysed reaction is (R)-carnitine + (9Z)-octadecenoyl-CoA = O-(9Z)-octadecenoyl-(R)-carnitine + CoA. It catalyses the reaction 4,8-dimethylnonanoyl-CoA + (R)-carnitine = O-4,8-dimethylnonanoyl-(R)-carnitine + CoA. It functions in the pathway lipid metabolism; fatty acid beta-oxidation. Its function is as follows. Involved in the intramitochondrial synthesis of acylcarnitines from accumulated acyl-CoA metabolites. Reconverts acylcarnitines back into the respective acyl-CoA esters that can then undergo beta-oxidation, an essential step for the mitochondrial uptake of long-chain fatty acids and their subsequent beta-oxidation in the mitochondrion. Active with medium (C8-C12) and long-chain (C14-C18) acyl-CoA esters. The protein is Carnitine O-palmitoyltransferase 2, mitochondrial (cpt2) of Xenopus tropicalis (Western clawed frog).